Reading from the N-terminus, the 412-residue chain is tRNA N6-adenosine threonylcarbamoyltransferase, mitochondrial (412 aa).

Residues 1 to 78 (MLCLVYNSIL…IICLNTHRTI (78 aa)) constitute a mitochondrion transit peptide. A divalent metal cation-binding residues include histidine 157 and histidine 161. Substrate contacts are provided by residues 179–183 (LVSGG), aspartate 212, alanine 228, glutamate 232, 328–329 (RN), and serine 363. Aspartate 364 lines the a divalent metal cation pocket.

The protein belongs to the KAE1 / TsaD family. As to quaternary structure, homodimer. A divalent metal cation is required as a cofactor.

It localises to the mitochondrion. The catalysed reaction is L-threonylcarbamoyladenylate + adenosine(37) in tRNA = N(6)-L-threonylcarbamoyladenosine(37) in tRNA + AMP + H(+). Functionally, required for the formation of a threonylcarbamoyl group on adenosine at position 37 (t(6)A37) in mitochondrial tRNAs that read codons beginning with adenine. Probably involved in the transfer of the threonylcarbamoyl moiety of threonylcarbamoyl-AMP (TC-AMP) to the N6 group of A37. Involved in mitochondrial genome maintenance. In Schizosaccharomyces pombe (strain 972 / ATCC 24843) (Fission yeast), this protein is tRNA N6-adenosine threonylcarbamoyltransferase, mitochondrial (pgp1).